Reading from the N-terminus, the 303-residue chain is Aspartate carbamoyltransferase catalytic subunit (303 aa).

Arg-48 and Thr-49 together coordinate carbamoyl phosphate. Lys-76 is an L-aspartate binding site. Arg-98, His-129, and Gln-132 together coordinate carbamoyl phosphate. The L-aspartate site is built by Arg-162 and Arg-214. 2 residues coordinate carbamoyl phosphate: Ala-257 and Pro-258.

This sequence belongs to the aspartate/ornithine carbamoyltransferase superfamily. ATCase family. In terms of assembly, heterododecamer (2C3:3R2) of six catalytic PyrB chains organized as two trimers (C3), and six regulatory PyrI chains organized as three dimers (R2).

It catalyses the reaction carbamoyl phosphate + L-aspartate = N-carbamoyl-L-aspartate + phosphate + H(+). The protein operates within pyrimidine metabolism; UMP biosynthesis via de novo pathway; (S)-dihydroorotate from bicarbonate: step 2/3. Catalyzes the condensation of carbamoyl phosphate and aspartate to form carbamoyl aspartate and inorganic phosphate, the committed step in the de novo pyrimidine nucleotide biosynthesis pathway. In Leuconostoc citreum (strain KM20), this protein is Aspartate carbamoyltransferase catalytic subunit.